Consider the following 394-residue polypeptide: Elongation factor Tu (394 aa).

A tr-type G domain is found at Lys-10–Glu-205. The segment at Gly-19–Thr-26 is G1. Residue Gly-19 to Thr-26 participates in GTP binding. Thr-26 provides a ligand contact to Mg(2+). The segment at Gly-61–Asn-65 is G2. Positions Asp-82–Gly-85 are G3. GTP is bound by residues Asp-82–His-86 and Asn-137–Asp-140. A G4 region spans residues Asn-137–Asp-140. The G5 stretch occupies residues Ser-173 to Phe-175.

This sequence belongs to the TRAFAC class translation factor GTPase superfamily. Classic translation factor GTPase family. EF-Tu/EF-1A subfamily. Monomer.

Its subcellular location is the cytoplasm. It catalyses the reaction GTP + H2O = GDP + phosphate + H(+). Its function is as follows. GTP hydrolase that promotes the GTP-dependent binding of aminoacyl-tRNA to the A-site of ribosomes during protein biosynthesis. This chain is Elongation factor Tu, found in Borreliella afzelii (strain PKo) (Borrelia afzelii).